A 314-amino-acid chain; its full sequence is Palmitoyl-protein thioesterase 1 (314 aa).

A signal peptide spans 1-25 (MISICCSRFSCILFLLFLIFSLVLS). Cystine bridges form between Cys53–Cys54, Cys104–Cys136, and Cys160–Cys168. Residue Ser123 is the Nucleophile of the active site. Residue Asn240 is glycosylated (N-linked (GlcNAc...) asparagine). Residues Asp241 and His295 contribute to the active site.

This sequence belongs to the palmitoyl-protein thioesterase family. Ubiquitously expressed.

Its subcellular location is the lysosome. It carries out the reaction S-hexadecanoyl-L-cysteinyl-[protein] + H2O = L-cysteinyl-[protein] + hexadecanoate + H(+). In terms of biological role, cleaves thioester-linked long fatty acyl groups such as palmitate from modified cysteine residues in proteins or peptides. The protein is Palmitoyl-protein thioesterase 1 (Ppt1) of Drosophila melanogaster (Fruit fly).